Consider the following 254-residue polypeptide: NAD-dependent protein deacylase (254 aa).

The 250-residue stretch at 1-250 (MERLEEARKR…LPPSPEDQAE (250 aa)) folds into the Deacetylase sirtuin-type domain. 22–41 (GAGISKPSGIPTFRDAEGLW) serves as a coordination point for NAD(+). Residues Tyr66 and Arg69 each coordinate substrate. NAD(+) is bound at residue 104–107 (QNVD). Residue His122 is the Proton acceptor of the active site. Residues Cys130, Cys133, Cys149, and Cys152 each coordinate Zn(2+). Residues 189 to 191 (GTS), 215 to 217 (NPE), and Ala233 contribute to the NAD(+) site.

It belongs to the sirtuin family. Class III subfamily. The cofactor is Zn(2+).

The protein localises to the cytoplasm. It carries out the reaction N(6)-acetyl-L-lysyl-[protein] + NAD(+) + H2O = 2''-O-acetyl-ADP-D-ribose + nicotinamide + L-lysyl-[protein]. It catalyses the reaction N(6)-succinyl-L-lysyl-[protein] + NAD(+) + H2O = 2''-O-succinyl-ADP-D-ribose + nicotinamide + L-lysyl-[protein]. Functionally, NAD-dependent lysine deacetylase and desuccinylase that specifically removes acetyl and succinyl groups on target proteins. Modulates the activities of several proteins which are inactive in their acylated form. The polypeptide is NAD-dependent protein deacylase (Thermus thermophilus (strain ATCC BAA-163 / DSM 7039 / HB27)).